The following is a 114-amino-acid chain: UPF0145 protein STK_10800 (114 aa).

Belongs to the UPF0145 family.

In Sulfurisphaera tokodaii (strain DSM 16993 / JCM 10545 / NBRC 100140 / 7) (Sulfolobus tokodaii), this protein is UPF0145 protein STK_10800.